Here is an 84-residue protein sequence, read N- to C-terminus: uncharacterized protein (84 aa).

A helical membrane pass occupies residues 7–23 (AFSGVIALYGGYLYLRL).

The protein resides in the membrane. This is an uncharacterized protein from Haemophilus influenzae (strain ATCC 51907 / DSM 11121 / KW20 / Rd).